A 156-amino-acid chain; its full sequence is Endogenous retrovirus group K member 10 Pro protein (156 aa).

A Peptidase A2 domain is found at 21-96 (FEGLVDTGAD…IPLNLWGRDL (76 aa)). Asp26 is an active-site residue. Residues 111 to 156 (YSPTSQKIMTKMGYIPGKGLGKNEDGIKVPVEAKINQEREGIGYPF) enclose the G-patch domain.

The protein belongs to the peptidase A2 family. HERV class-II K(HML-2) subfamily. Active as a homodimer. Autoproteolytically processed at the N-terminus. Expected C-terminal autoprocessing not detected. The sequence shown is that of the processed Pro protein.

The enzyme catalyses Processing at the authentic HIV-1 PR recognition site and release of the mature p17 matrix and the p24 capsid protein, as a result of the cleavage of the -SQNY-|-PIVQ- cleavage site.. Its activity is regulated as follows. Resistant to a number of clinically useful HIV-1 PR inhibitors. Inhibited by cyclic urea SD146. In terms of biological role, retroviral proteases have roles in processing of the primary translation products and the maturation of the viral particle. Endogenous Pro proteins may have kept, lost or modified their original function during evolution. This endogenous protein has retained most of the characteristics of retroviral proteases. The chain is Endogenous retrovirus group K member 10 Pro protein (ERVK-10) from Homo sapiens (Human).